Reading from the N-terminus, the 648-residue chain is MVHSDLGIEELDSPESSLNGSEDMESKSNLYSQYEEKVRPCIDLIDSLRSLGVEQDLALPAIAVIGDQSSGKSSVLEALSGVALPRGSGIVTRCPLVLRLKKLGNEDEWKGKVSFLDKEIEIPDASQVEKEISEAQIAIAGEGTGISHELISLEVSSPHVPDLTLIDLPGITRVAVGNQPPDIEYQIKSLIRKYILRQETINLVVVPANVDIATTEALRMAQEVDPQGDRTIGILTKPDLVDKGTEDKVVDVVRNLVFHLKKGYMIVKCRGQQDIKHRMSLDKALQRERIFFEDHAHFRDLLEEGKATIPCLAERLTSELIMHICKTLPLLENQIKETHQRITEELQKYGKDIPEEESEKMFCLIEKIDTFNKEIISTIEGEEFVEQYDSRLFTKVRAEFSKWSAVVEKNFEKGYEAIRKEIKQFENRYRGRELPGFVNYKTFETIIKKQVRVLEEPAVDMLHTVTDIIRNTFTDVSGKHFNEFFNLHRTAKSKIEDIRLEQENEAEKSIRLHFQMEQLVYCQDQVYRRALQQVREKEAEEEKNKKSNHYFQSQVSEPSTDEIFQHLTAYQQEVSTRISGHIPLIIQFFVLRTYGEQLKKSMLQLLQDKDQYDWLLKERTDTRDKRKFLKERLERLTRARQRLAKFPG.

Position 1 is an N-acetylmethionine (M1). The tract at residues 1-26 (MVHSDLGIEELDSPESSLNGSEDMES) is disordered. The 274-residue stretch at 56-329 (DLALPAIAVI…LIMHICKTLP (274 aa)) folds into the Dynamin-type G domain. A G1 motif region spans residues 66-73 (GDQSSGKS). GTP is bound at residue 66–73 (GDQSSGKS). The tract at residues 91–93 (VTR) is G2 motif. The G3 motif stretch occupies residues 167-170 (DLPG). GTP is bound by residues 167–171 (DLPGI) and 236–239 (TKPD). The segment at 236–239 (TKPD) is G4 motif. The segment at 268–271 (KCRG) is G5 motif. Residues 330-355 (LLENQIKETHQRITEELQKYGKDIPE) are bundle signaling element (BSE). A middle domain region spans residues 355-522 (EEESEKMFCL…HFQMEQLVYC (168 aa)). The tract at residues 356-618 (EESEKMFCLI…KDQYDWLLKE (263 aa)) is stalk. Residues 543-546 (KNKK) form a critical for lipid-binding region. In terms of domain architecture, GED spans 560–648 (TDEIFQHLTA…ARQRLAKFPG (89 aa)).

The protein belongs to the TRAFAC class dynamin-like GTPase superfamily. Dynamin/Fzo/YdjA family. In terms of assembly, homooligomer. Oligomerizes into multimeric filamentous or ring-like structures by virtue of its stalk domain. Oligomerization is critical for GTPase activity, protein stability, and recognition of viral target structures. Interacts with TRPC1, TRPC3, TRPC4, TRPC5, TRPC6 and TRPC7. Interacts with HSPA5. Interacts with TUBB/TUBB5. Interacts with DDX39A and DDX39B. ISGylated. In terms of tissue distribution, ubiquitously expressed.

It localises to the cytoplasm. Its subcellular location is the endoplasmic reticulum membrane. It is found in the perinuclear region. The protein localises to the nucleus. Functionally, interferon-induced dynamin-like GTPase with antiviral activity against rabies virus (RABV), vesicular stomatitis virus (VSV) and murine pneumonia virus (MPV). Isoform 1 but not isoform 2 shows antiviral activity against vesicular stomatitis virus (VSV). The protein is Interferon-induced GTP-binding protein Mx1 (MX1) of Bos taurus (Bovine).